We begin with the raw amino-acid sequence, 588 residues long: ustiloxin B cluster transcription factor ustR (588 aa).

A DNA-binding region (zn(2)-C6 fungal-type) is located at residues 11–38 (CWTCRLRRKKCNEDGQPCSNCEARGVFC). The disordered stretch occupies residues 68–92 (RTRRARATPTNSINGEPRRPSIDMN).

Its subcellular location is the nucleus. Its function is as follows. Transcription factor that regulates the expression of the gene cluster that mediates the biosynthesis of ustiloxin B, an antimitotic tetrapeptide. In Aspergillus flavus (strain ATCC 200026 / FGSC A1120 / IAM 13836 / NRRL 3357 / JCM 12722 / SRRC 167), this protein is ustiloxin B cluster transcription factor ustR.